The sequence spans 372 residues: Germination protease (372 aa).

Positions 1 to 15 (MVKELNLEQYNVRTD) are excised as a propeptide.

It belongs to the peptidase A25 family. Homotetramer. In terms of processing, autoproteolytically processed. The inactive tetrameric zymogen termed p46 autoprocesses to a smaller form termed p41, which is active only during spore germination.

The catalysed reaction is Endopeptidase action with P4 Glu or Asp, P1 preferably Glu &gt; Asp, P1' hydrophobic and P2' Ala.. Initiates the rapid degradation of small, acid-soluble proteins during spore germination. This is Germination protease from Halalkalibacterium halodurans (strain ATCC BAA-125 / DSM 18197 / FERM 7344 / JCM 9153 / C-125) (Bacillus halodurans).